We begin with the raw amino-acid sequence, 448 residues long: Methylenetetrahydrofolate--tRNA-(uracil-5-)-methyltransferase TrmFO (448 aa).

FAD is bound at residue 13–18 (GAGLAG).

The protein belongs to the MnmG family. TrmFO subfamily. It depends on FAD as a cofactor.

The protein resides in the cytoplasm. It catalyses the reaction uridine(54) in tRNA + (6R)-5,10-methylene-5,6,7,8-tetrahydrofolate + NADH + H(+) = 5-methyluridine(54) in tRNA + (6S)-5,6,7,8-tetrahydrofolate + NAD(+). It carries out the reaction uridine(54) in tRNA + (6R)-5,10-methylene-5,6,7,8-tetrahydrofolate + NADPH + H(+) = 5-methyluridine(54) in tRNA + (6S)-5,6,7,8-tetrahydrofolate + NADP(+). Functionally, catalyzes the folate-dependent formation of 5-methyl-uridine at position 54 (M-5-U54) in all tRNAs. In Streptococcus pyogenes serotype M2 (strain MGAS10270), this protein is Methylenetetrahydrofolate--tRNA-(uracil-5-)-methyltransferase TrmFO.